Here is a 143-residue protein sequence, read N- to C-terminus: Small ribosomal subunit protein bS6 (143 aa).

Residues 100 to 143 are disordered; the sequence is QSFIMKSKDDKGDKPERRRRDDDESGDVGVSNDSDNDGGNAEAA. The span at 105–121 shows a compositional bias: basic and acidic residues; that stretch reads KSKDDKGDKPERRRRDD. The segment covering 126–143 has biased composition (low complexity); sequence DVGVSNDSDNDGGNAEAA.

It belongs to the bacterial ribosomal protein bS6 family.

In terms of biological role, binds together with bS18 to 16S ribosomal RNA. This Xylella fastidiosa (strain M12) protein is Small ribosomal subunit protein bS6.